The following is a 143-amino-acid chain: Large ribosomal subunit protein uL11 (143 aa).

It belongs to the universal ribosomal protein uL11 family. As to quaternary structure, part of the ribosomal stalk of the 50S ribosomal subunit. Interacts with L10 and the large rRNA to form the base of the stalk. L10 forms an elongated spine to which L12 dimers bind in a sequential fashion forming a multimeric L10(L12)X complex. Post-translationally, one or more lysine residues are methylated.

Forms part of the ribosomal stalk which helps the ribosome interact with GTP-bound translation factors. This Rhizorhabdus wittichii (strain DSM 6014 / CCUG 31198 / JCM 15750 / NBRC 105917 / EY 4224 / RW1) (Sphingomonas wittichii) protein is Large ribosomal subunit protein uL11.